A 329-amino-acid chain; its full sequence is MASQLTDAFARKFYYLRLSITDVCNFRCTYCLPNGYKPGAVNNNGFLSVDEVRRVTRAFSALGTEKVRLTGGEPSLRRDFTEIIAAVRENPAIRQIAVTTNGYRLARDVERWRDAGLTAINVSVDSLDARQFHAITGQDKFHQVMDGIDAAFAAGFDKVKVNTVLMRDVNHHQLDTFLAWIQPRRIQLRFIELMETGEGSDLFRRHHLSGMVLRDELLRRGWIHQIRQRSDGPAQVFCHPDYAGEIGLIMPYEKDFCATCNRLRVSSVGKLHLCLFGEGGVDLRDLMAEDRQQAALEARIAEALTHKKQTHFLHQGNTGITQNLSYIGG.

A Radical SAM core domain is found at 8–234 (AFARKFYYLR…QIRQRSDGPA (227 aa)). R17 contributes to the GTP binding site. The [4Fe-4S] cluster site is built by C24 and C28. Y30 serves as a coordination point for S-adenosyl-L-methionine. [4Fe-4S] cluster is bound at residue C31. R68 is a GTP binding site. G72 is an S-adenosyl-L-methionine binding site. A GTP-binding site is contributed by T99. S123 contributes to the S-adenosyl-L-methionine binding site. Residue K160 participates in GTP binding. M194 contacts S-adenosyl-L-methionine. [4Fe-4S] cluster contacts are provided by C257 and C260. Residue 262–264 (RLR) coordinates GTP. A [4Fe-4S] cluster-binding site is contributed by C274.

The protein belongs to the radical SAM superfamily. MoaA family. As to quaternary structure, monomer and homodimer. Requires [4Fe-4S] cluster as cofactor.

The catalysed reaction is GTP + AH2 + S-adenosyl-L-methionine = (8S)-3',8-cyclo-7,8-dihydroguanosine 5'-triphosphate + 5'-deoxyadenosine + L-methionine + A + H(+). It participates in cofactor biosynthesis; molybdopterin biosynthesis. In terms of biological role, catalyzes the cyclization of GTP to (8S)-3',8-cyclo-7,8-dihydroguanosine 5'-triphosphate. This Klebsiella pneumoniae subsp. pneumoniae (strain ATCC 700721 / MGH 78578) protein is GTP 3',8-cyclase.